The chain runs to 1082 residues: MMSGTGNVSSMLHSYSANIQHNDGSPDLDLLESELLDIALLNSGSSLQDPGLLSLNQEKMITAGTTTPGKEDEGELRDDIASLQGLLDRHVQFGRKLPLRTPYANPLDFININPQSLPLSLEIIGLPKVSRVETQMKLSFRIRNAHARKNFFIHLPSDCIAKDKFFTSSDDPTNLTIPNRDINERTLFLDAFLLCASNNNSNNFKQTYVCNRCINREKRRASRRKSGLNDNSIWQNNENKRAIIFNSKQLFIISNNGLSGNSNCINFDLPTRIVCYCRHHKATNGFVVLFLLRDHNGDILAKTITDPIMIMDKKNASNTTTPTSTSNAQVSPMTNDTRSFSSPQSDLNFPSEFPLPSNSKNFVISTNCMLDSNCNNNNNDNDNKNNIKTNTAMMNNNRHFPSPNSSSEDSNHSFSDIHFSNNNDNNLHRSLDSWSSTGFNSSSNPALTTLTSDFSAASARHTGKRQRSVNEPFMSTPNTFSRLPQKFIDSSKDISNHNSVPVALNNKPSIQRVIPAQGSINGGIEVTLLGSKFKQGLIIKFGENIALSSQCWNESTMVTYLPPSSKPGPVLVTIVDPSETSMRNNSNSSVSTSNSTNDILHLNKYTGEKAIFTYVDDTDRQLIELALQIVGLKMNGKLEDARNIAKRIVGSDSSPSNNNAGLHSQNSSLNSYTNMMRNINDEQLITEVIKSFKRNNNLSTVNLSMCDVRGRTLLHLAAFNNWYSLVSLLIKYGSHLNDQDLFGFTPLHMACINGDLRIIRLLLECNVNIMKKTRNGFIAKQFFLMNYTVNKTRYSNYETSLFDDILTRLTKNTTGSSDTQPFERNVSQSSFNSSLFDDDDADHDYVQERKYLLADSAALAPEQSNCNDNTSFSILDSDSGYDISDCESSSDEIALEFFNTHKIKDFSSKPNEIPKTTKTSIEPDGSLWNRMLTRLNDELPKYEDLFPKKPKNWELGSKSVEIGPDNSAQMTVDDSQTSSEDDELEALQVGFNTIFSKKQNFQNDKMLLFFWIPLTLVLLLCFTLSNLGKDDDMFHNLSKIVQEYLRIGLAKVLLGNERMKTSFKMQLSKFQNNNILNDMRVN.

Disordered stretches follow at residues 315-346 (NASN…PQSD), 376-417 (NNNN…FSDI), and 457-476 (ASAR…FMST). Low complexity predominate over residues 316-328 (ASNTTTPTSTSNA). Residues 329-346 (QVSPMTNDTRSFSSPQSD) are compositionally biased toward polar residues. Low complexity-rich tracts occupy residues 376 to 391 (NNNN…KTNT) and 399 to 416 (HFPS…SFSD). Position 468 is a phosphoserine (Ser-468). The IPT/TIG domain maps to 508–585 (PSIQRVIPAQ…DPSETSMRNN (78 aa)). ANK repeat units follow at residues 709–738 (RGRT…HLND) and 742–771 (FGFT…NIMK).

In terms of biological role, dosage-dependent suppressor of Ty-induced promoter mutations. May exert its suppression effect through protein-protein interactions since does not present any of the motifs generally found in transcriptional activators or DNA binding proteins. This is Protein SPT23 (SPT23) from Saccharomyces cerevisiae (strain ATCC 204508 / S288c) (Baker's yeast).